We begin with the raw amino-acid sequence, 296 residues long: Regulatory protein PchR (296 aa).

In terms of domain architecture, HTH araC/xylS-type spans 201–296 (HAARDLLVGA…RYGISPSEIR (96 aa)). DNA-binding regions (H-T-H motif) lie at residues 218 to 239 (DTLA…RKVF) and 266 to 288 (VSTV…RKRY).

In terms of biological role, positive activator of the genes for pyochelin and ferripyochelin receptors. This chain is Regulatory protein PchR (pchR), found in Pseudomonas aeruginosa (strain ATCC 15692 / DSM 22644 / CIP 104116 / JCM 14847 / LMG 12228 / 1C / PRS 101 / PAO1).